We begin with the raw amino-acid sequence, 226 residues long: Protein FMP52-1, mitochondrial (226 aa).

A mitochondrion-targeting transit peptide spans 1-43; it reads MSAFVLGSTGLVGLQILKVLDSSTAFKKVSTVSRRLPSVTSGK.

This sequence belongs to the FMP52 family.

It is found in the mitochondrion outer membrane. This chain is Protein FMP52-1, mitochondrial (FMP521), found in Scheffersomyces stipitis (strain ATCC 58785 / CBS 6054 / NBRC 10063 / NRRL Y-11545) (Yeast).